A 293-amino-acid polypeptide reads, in one-letter code: Calcium uniporter protein 2, mitochondrial (293 aa).

Residues 1–33 (MWSVMGLVRRTAMSSTVNKASPVRSLLGGFRCL) constitute a mitochondrion transit peptide. Residues 168–188 (ILWGGLGYSVVQIGIFVRLTF) form a helical membrane-spanning segment. The Selectivity filter motif lies at 193–201 (WDVMEPITF). Residue Glu197 participates in Ca(2+) binding. A helical membrane pass occupies residues 198 to 218 (PITFFTTATGIIVGYAYFLMT).

The protein belongs to the MCU (TC 1.A.77) family.

It localises to the mitochondrion inner membrane. It catalyses the reaction Ca(2+)(in) = Ca(2+)(out). Mitochondrial inner membrane calcium uniporter that mediates calcium uptake into mitochondria. Constitutes a pore-forming and calcium-conducting subunit. Mitochondrial calcium homeostasis plays key roles in cellular physiology and regulates cell bioenergetics, cytoplasmic calcium signals and activation of cell death pathways. The sequence is that of Calcium uniporter protein 2, mitochondrial from Arabidopsis thaliana (Mouse-ear cress).